Here is a 1080-residue protein sequence, read N- to C-terminus: Putative bifunctional amine oxidase DDB_G0291301 (1080 aa).

The interval 1 to 450 is putative sarcosine oxidase; it reads MREFLKDDYD…TIAKSTVPTN (450 aa). An FAD-binding site is contributed by 10–40; that stretch reads DVIVCGGGPVGLATAYRCAKAGKKVLCLEKS. Residues 445–464 are disordered; the sequence is STVPTNQSSNPDGASSTAPT. Positions 450–1080 are putative L-amino-acid oxidase; sequence NQSSNPDGAS…NTAASIGGLK (631 aa). The helical transmembrane segment at 508 to 528 threads the bilayer; that stretch reads VGIIGAGMAGLYAAMILQDLG. Residues Glu535, Arg544, and 563–564 each bind FAD; that span reads GA. Residue Tyr886 coordinates substrate. FAD is bound by residues Glu978 and 987–990; that span reads VIGS.

It in the N-terminal section; belongs to the MSOX/MTOX family. This sequence in the C-terminal section; belongs to the flavin monoamine oxidase family. The cofactor is FAD.

It localises to the membrane. The enzyme catalyses sarcosine + O2 + H2O = formaldehyde + glycine + H2O2. It carries out the reaction L-pipecolate + O2 = L-1-piperideine-6-carboxylate + H2O2 + H(+). It catalyses the reaction an L-alpha-amino acid + O2 + H2O = a 2-oxocarboxylate + H2O2 + NH4(+). Functionally, catalyzes an oxidative deamination of predominantly hydrophobic and aromatic L-amino acids. Metabolizes sarcosine, L-pipecolic acid and L-proline. This Dictyostelium discoideum (Social amoeba) protein is Putative bifunctional amine oxidase DDB_G0291301.